Here is a 780-residue protein sequence, read N- to C-terminus: GATOR2 complex protein WDR24 (780 aa).

WD repeat units lie at residues 67–107 (SLNF…RNKQ), 113–153 (EHKR…SVST), 156–196 (GQSE…RCER), 200–240 (AHNG…AKEI), 244–286 (QTIA…IPFA), and 290–333 (EHKD…IDRA). A C4-type zinc finger spans residues 708 to 730 (NCSNCKRPMSNKGWICDRCRQCA). 15 residues coordinate Zn(2+): Cys-709, Cys-712, Cys-723, Cys-726, Cys-733, Cys-736, Cys-747, Cys-750, His-752, His-755, His-758, Cys-769, Cys-773, His-775, and Cys-777. An RING-type; atypical zinc finger spans residues 731 to 780 (SMCAVCHHVVKGLFVWCQGCCHGGHLQHIMNWMQNNCYCPAGCGHVCEYS).

Belongs to the WD repeat WDR24 family. In terms of assembly, component of the GATOR2 subcomplex, composed of MIOS, SEC13, SEH1L, WDR24 and WDR59. The GATOR2 complex interacts with CASTOR1 and CASTOR2; the interaction is negatively regulated by arginine. The GATOR2 complex interacts with SESN1, SESN2 and SESN3; the interaction is negatively regulated by amino acids.

Its subcellular location is the lysosome membrane. It carries out the reaction S-ubiquitinyl-[E2 ubiquitin-conjugating enzyme]-L-cysteine + [acceptor protein]-L-lysine = [E2 ubiquitin-conjugating enzyme]-L-cysteine + N(6)-ubiquitinyl-[acceptor protein]-L-lysine.. It participates in protein modification; protein ubiquitination. Its activity is regulated as follows. The GATOR2 complex is negatively regulated by the upstream amino acid sensors CASTOR1 and SESN2, which sequester the GATOR2 complex in absence of amino acids. In the presence of abundant amino acids, GATOR2 is released from CASTOR1 and SESN2 and activated. In terms of biological role, catalytic component of the GATOR2 complex, a multiprotein complex that acts as an activator of the amino acid-sensing branch of the mTORC1 signaling pathway. The GATOR2 complex indirectly activates mTORC1 through the inhibition of the GATOR1 subcomplex. GATOR2 probably acts as an E3 ubiquitin-protein ligase toward GATOR1. In the presence of abundant amino acids, the GATOR2 complex mediates ubiquitination of the NPRL2 core component of the GATOR1 complex, leading to GATOR1 inactivation. In the absence of amino acids, GATOR2 is inhibited, activating the GATOR1 complex. In addition to its role in regulation of the mTORC1 complex, promotes the acidification of lysosomes and facilitates autophagic flux. Within the GATOR2 complex, WDR24 constitutes the catalytic subunit that mediates 'Lys-6'-linked ubiquitination of NPRL2. The polypeptide is GATOR2 complex protein WDR24 (Xenopus laevis (African clawed frog)).